Here is an 89-residue protein sequence, read N- to C-terminus: MASFFKIAVICLVMLVVCSNARVIDVDDDYLMDFAASKRGGQTCYCRGGSGPTGGFWGGQNCPAGMTSCRKNILGNCCQKSKEGTDCDI.

A signal peptide spans 1 to 21; it reads MASFFKIAVICLVMLVVCSNA. Cystine bridges form between Cys-44–Cys-77, Cys-46–Cys-69, and Cys-62–Cys-78.

As to expression, expressed in ectodermal gland cells.

In terms of biological role, probable toxin. The sequence is that of N.vectensis toxin 7 from Nematostella vectensis (Starlet sea anemone).